The following is a 129-amino-acid chain: MMPKTIITPPGSGTPLAPFSPGTLADGVMYVSGTLAFDKQNNVVHIGDAAGQTRHVLETIKSVIETAGGSLDDITFNSIFLTDWQHYAAINQVYAEYFPGDKPARFCIQCGLVKPDALIEIASVAHLPR.

This sequence belongs to the RutC family.

It carries out the reaction (Z)-3-aminoacrylate + H2O + H(+) = 3-oxopropanoate + NH4(+). Involved in pyrimidine catabolism. Catalyzes the deamination of 3-aminoacrylate to malonic semialdehyde, a reaction that can also occur spontaneously. RutC may facilitate the reaction and modulate the metabolic fitness, rather than catalyzing essential functions. This is 3-aminoacrylate deaminase RutC from Yersinia enterocolitica serotype O:8 / biotype 1B (strain NCTC 13174 / 8081).